Reading from the N-terminus, the 237-residue chain is Probable transcriptional regulatory protein Fjoh_2560 (237 aa).

It belongs to the TACO1 family.

It localises to the cytoplasm. The sequence is that of Probable transcriptional regulatory protein Fjoh_2560 from Flavobacterium johnsoniae (strain ATCC 17061 / DSM 2064 / JCM 8514 / BCRC 14874 / CCUG 350202 / NBRC 14942 / NCIMB 11054 / UW101) (Cytophaga johnsonae).